We begin with the raw amino-acid sequence, 307 residues long: UDP-N-acetylenolpyruvoylglucosamine reductase (307 aa).

Residues 33-198 (KVGGPADIFV…LNATFALQKG (166 aa)) form the FAD-binding PCMH-type domain. Arginine 177 is an active-site residue. The active-site Proton donor is the serine 227. Residue glutamate 297 is part of the active site.

It belongs to the MurB family. Requires FAD as cofactor.

It localises to the cytoplasm. The catalysed reaction is UDP-N-acetyl-alpha-D-muramate + NADP(+) = UDP-N-acetyl-3-O-(1-carboxyvinyl)-alpha-D-glucosamine + NADPH + H(+). Its pathway is cell wall biogenesis; peptidoglycan biosynthesis. In terms of biological role, cell wall formation. This chain is UDP-N-acetylenolpyruvoylglucosamine reductase, found in Clostridium novyi (strain NT).